Consider the following 350-residue polypeptide: 4-hydroxy-2-oxovalerate aldolase 2 (350 aa).

The region spanning 8-260 (ITVHDMTLRD…ETGVDVFKIQ (253 aa)) is the Pyruvate carboxyltransferase domain. 16–17 (RD) serves as a coordination point for substrate. D17 serves as a coordination point for Mn(2+). H20 serves as the catalytic Proton acceptor. S170 and H199 together coordinate substrate. Residues H199 and H201 each coordinate Mn(2+). Y290 contributes to the substrate binding site.

The protein belongs to the 4-hydroxy-2-oxovalerate aldolase family.

The catalysed reaction is (S)-4-hydroxy-2-oxopentanoate = acetaldehyde + pyruvate. In Comamonas testosteroni (Pseudomonas testosteroni), this protein is 4-hydroxy-2-oxovalerate aldolase 2 (tesG).